Consider the following 75-residue polypeptide: MQKRHTFNTAQVMRRAEELIEASSNRYRITVQVANRAKKRRRLDNDDLEEGGMKAVMQAIVEMSDELAQPEIIGD.

Belongs to the RNA polymerase subunit omega family. In cyanobacteria the RNAP catalytic core is composed of 2 alpha, 1 beta, 1 beta', 1 gamma and 1 omega subunit. When a sigma factor is associated with the core the holoenzyme is formed, which can initiate transcription.

The enzyme catalyses RNA(n) + a ribonucleoside 5'-triphosphate = RNA(n+1) + diphosphate. Functionally, promotes RNA polymerase assembly. Latches the N- and C-terminal regions of the beta' subunit thereby facilitating its interaction with the beta and alpha subunits. The sequence is that of DNA-directed RNA polymerase subunit omega from Cyanothece sp. (strain PCC 7425 / ATCC 29141).